The chain runs to 517 residues: MSEQVALNPSEISELIRKKIDQFSVVSEARNEGTIVSLKDGIVRLHGLADVMAGEMIEFPGGVYGLALNLERDSVGAVILGDSSTLAEGQKGKCTGRILEVPVGKGLLGRVVDALGNPIDGKGPIESSGMSPIEKVAPGVITRKSVDQPVQTGLKAIDAMIPVGRGQRELIIGDRQTGKTAIAIDAIINQKGTGVKCVYVAIGQKASSVASIVRKLEEHGALEHTIVVVAGASDSAALQYIAPYSGCTMGEYFMERGEDALIVYDDLTKQAWAYRQISLLLRRPPGREAYPGDIFYLHSRLLERAARINADEVEKLTNGEVKGKTGSLTALPIIETQAGDVSAFVPTNVISITDGQIFLDVDLFNSGVRPAINSGLSVSRVGGAAQTKIMKKLGGGTRLALAQFRELEAFSQFASDLDDATRKQLERGQRITELMKQKQYSPLTVAEMGVSLFVVEKGYLDDVPVNEISSFEASLHDYMRSTHAALLHAINEAGAYDNEIEAKLKKAVEEFKNTGSW.

Position 173–180 (173–180 (GDRQTGKT)) interacts with ATP.

Belongs to the ATPase alpha/beta chains family. F-type ATPases have 2 components, CF(1) - the catalytic core - and CF(0) - the membrane proton channel. CF(1) has five subunits: alpha(3), beta(3), gamma(1), delta(1), epsilon(1). CF(0) has three main subunits: a(1), b(2) and c(9-12). The alpha and beta chains form an alternating ring which encloses part of the gamma chain. CF(1) is attached to CF(0) by a central stalk formed by the gamma and epsilon chains, while a peripheral stalk is formed by the delta and b chains.

The protein localises to the cell inner membrane. It catalyses the reaction ATP + H2O + 4 H(+)(in) = ADP + phosphate + 5 H(+)(out). Its function is as follows. Produces ATP from ADP in the presence of a proton gradient across the membrane. The alpha chain is a regulatory subunit. The protein is ATP synthase subunit alpha 2 of Legionella pneumophila subsp. pneumophila (strain Philadelphia 1 / ATCC 33152 / DSM 7513).